Here is a 424-residue protein sequence, read N- to C-terminus: Histidinol dehydrogenase (424 aa).

NAD(+) is bound by residues tyrosine 121, glutamine 183, and asparagine 206. Residues serine 229, glutamine 251, and histidine 254 each contribute to the substrate site. 2 residues coordinate Zn(2+): glutamine 251 and histidine 254. Catalysis depends on proton acceptor residues glutamate 319 and histidine 320. Histidine 320, aspartate 353, glutamate 407, and histidine 412 together coordinate substrate. Aspartate 353 is a Zn(2+) binding site. Histidine 412 contacts Zn(2+).

It belongs to the histidinol dehydrogenase family. Requires Zn(2+) as cofactor.

It catalyses the reaction L-histidinol + 2 NAD(+) + H2O = L-histidine + 2 NADH + 3 H(+). It functions in the pathway amino-acid biosynthesis; L-histidine biosynthesis; L-histidine from 5-phospho-alpha-D-ribose 1-diphosphate: step 9/9. Its function is as follows. Catalyzes the sequential NAD-dependent oxidations of L-histidinol to L-histidinaldehyde and then to L-histidine. This chain is Histidinol dehydrogenase, found in Geobacillus kaustophilus (strain HTA426).